The primary structure comprises 156 residues: MPRRREVPKREVLPDSRYNSELVAKFVNVIMRDGKKSVAEGILYDAFDIMEERTKEAPLEIFEKAINNIKPVIEVKSRRVGGSTYQIPMEVRANRRTALAMKWIMTYSRSRSEKKMSAKLAGELLDAYNNRGASIKKKEDTHRMAEANKAFAHYRW.

This sequence belongs to the universal ribosomal protein uS7 family. Part of the 30S ribosomal subunit. Contacts proteins S9 and S11.

One of the primary rRNA binding proteins, it binds directly to 16S rRNA where it nucleates assembly of the head domain of the 30S subunit. Is located at the subunit interface close to the decoding center, probably blocks exit of the E-site tRNA. This is Small ribosomal subunit protein uS7 from Desulfatibacillum aliphaticivorans.